Here is a 525-residue protein sequence, read N- to C-terminus: Packaging protein UL32 homolog (525 aa).

Residues 1-12 (MAHKVTSANEPN) are compositionally biased toward polar residues. A disordered region spans residues 1–20 (MAHKVTSANEPNPLTGKRLS). Zn(2+)-binding residues include Cys-95, Cys-98, His-173, Cys-179, Cys-255, Cys-256, Cys-357, Cys-360, His-427, Cys-434, Cys-473, and His-510. Zinc finger stretches follow at residues 95–179 (CRVC…ICRC), 255–510 (CCHL…LRIH), and 357–434 (CPLC…DPLC).

The protein belongs to the herpesviridae UL32 protein family.

The protein localises to the host cytoplasm. It is found in the host nucleus. Plays a role in efficient localization of neo-synthesized capsids to nuclear replication compartments, thereby controlling cleavage and packaging of virus genomic DNA. This Epstein-Barr virus (strain B95-8) (HHV-4) protein is Packaging protein UL32 homolog.